We begin with the raw amino-acid sequence, 163 residues long: PTS system fructose-specific EIIB component (163 aa).

One can recognise a PTS EIIB type-4 domain in the interval 1 to 163 (MMNIVLARID…FVQILRNVTK (163 aa)). H15 functions as the Pros-phosphohistidine intermediate in the catalytic mechanism. Phosphohistidine; by EIIA is present on H15.

The protein resides in the cytoplasm. The enzyme catalyses D-fructose(out) + N(pros)-phospho-L-histidyl-[protein] = D-fructose 1-phosphate(in) + L-histidyl-[protein]. Functionally, the phosphoenolpyruvate-dependent sugar phosphotransferase system (sugar PTS), a major carbohydrate active -transport system, catalyzes the phosphorylation of incoming sugar substrates concomitantly with their translocation across the cell membrane. The enzyme II LevDE PTS system is involved in fructose transport. Its function is as follows. LevD and LevE act as negative regulators of the levanase operon. They may be involved in a PTS-mediated phosphorylation of a regulator. This is PTS system fructose-specific EIIB component from Bacillus subtilis (strain 168).